The sequence spans 440 residues: Ribulose bisphosphate carboxylase large chain (440 aa).

Lys4 carries the post-translational modification N6,N6,N6-trimethyllysine. Substrate contacts are provided by Asn113 and Thr163. The active-site Proton acceptor is Lys165. Lys167 contributes to the substrate binding site. Residues Lys191, Asp193, and Glu194 each contribute to the Mg(2+) site. Residue Lys191 is modified to N6-carboxylysine. His284 acts as the Proton acceptor in catalysis. Residues Arg285, His317, and Ser369 each contribute to the substrate site.

Belongs to the RuBisCO large chain family. Type I subfamily. In terms of assembly, heterohexadecamer of 8 large chains and 8 small chains; disulfide-linked. The disulfide link is formed within the large subunit homodimers. It depends on Mg(2+) as a cofactor. In terms of processing, the disulfide bond which can form in the large chain dimeric partners within the hexadecamer appears to be associated with oxidative stress and protein turnover.

The protein localises to the plastid. It localises to the chloroplast. It catalyses the reaction 2 (2R)-3-phosphoglycerate + 2 H(+) = D-ribulose 1,5-bisphosphate + CO2 + H2O. It carries out the reaction D-ribulose 1,5-bisphosphate + O2 = 2-phosphoglycolate + (2R)-3-phosphoglycerate + 2 H(+). In terms of biological role, ruBisCO catalyzes two reactions: the carboxylation of D-ribulose 1,5-bisphosphate, the primary event in carbon dioxide fixation, as well as the oxidative fragmentation of the pentose substrate in the photorespiration process. Both reactions occur simultaneously and in competition at the same active site. The chain is Ribulose bisphosphate carboxylase large chain from Matteuccia struthiopteris (European ostrich fern).